The sequence spans 521 residues: DNA damage-binding protein cmr1 (521 aa).

Positions 36–75 are disordered; it reads DKIIPKPAPPKPKRASTPRVKREPVKKEAARPTRQSSRLA. Residues 55–66 are compositionally biased toward basic and acidic residues; the sequence is VKREPVKKEAAR. WD repeat units follow at residues 183–224, 242–282, 333–373, 382–422, and 490–521; these read IVPQ…PKIE, THSR…STEI, LTDH…GKGD, EHES…EWKA, and DGITAVPAVAHFHPTKDWVAGGTASGKLCLWM.

This sequence belongs to the WD repeat DDB2/WDR76 family.

Its function is as follows. DNA-binding protein that binds to both single- and double-stranded DNA. Binds preferentially to UV-damaged DNA. May be involved in DNA-metabolic processes. This Neurospora crassa (strain ATCC 24698 / 74-OR23-1A / CBS 708.71 / DSM 1257 / FGSC 987) protein is DNA damage-binding protein cmr1.